A 359-amino-acid polypeptide reads, in one-letter code: Outer membrane protein P5 (359 aa).

The N-terminal stretch at 1-21 (MKKTAIALVVAGLAAASVAQA) is a signal peptide. 8 beta stranded membrane-spanning segments follow: residues 27–37 (TFYAGVKAGQG), 64–75 (TFTYGVFGGYQI), 83–91 (LAAELGYDD), 110–121 (HGAYLSLKGSYE), 126–134 (LDVYGKAGV), 164–173 (GLFAVGAEYA), 178–185 (LAVRLEYQ), and 211–219 (CINAGISYR). Residues 233–359 (MVSKTFSLNS…RVEIAVNGTK (127 aa)) enclose the OmpA-like domain. A disulfide bridge connects residues Cys332 and Cys344.

The protein belongs to the outer membrane OOP (TC 1.B.6) superfamily. OmpA family. Monomer and homodimer.

Its subcellular location is the cell outer membrane. It localises to the fimbrium. Acts as a fimbriae subunit, allowing adhesion to host cells. Its function is as follows. With TolR probably plays a role in maintaining the position of the peptidoglycan cell wall in the periplasm. Acts as a porin with low permeability that allows slow penetration of small solutes; an internal gate slows down solute passage. This is Outer membrane protein P5 from Haemophilus influenzae.